The sequence spans 503 residues: Maturase K (503 aa).

This sequence belongs to the intron maturase 2 family. MatK subfamily.

The protein resides in the plastid. It localises to the chloroplast. Functionally, usually encoded in the trnK tRNA gene intron. Probably assists in splicing its own and other chloroplast group II introns. The chain is Maturase K from Kunzea pulchella (Red kunzea).